The chain runs to 732 residues: Ferric aerobactin receptor (732 aa).

The first 25 residues, methionine 1 to alanine 25, serve as a signal peptide directing secretion. Positions glutamate 31–asparagine 38 match the TonB box motif. The TBDR plug domain occupies threonine 43–lysine 153. The region spanning glutamate 158 to phenylalanine 732 is the TBDR beta-barrel domain. The TonB C-terminal box signature appears at tyrosine 715–phenylalanine 732.

The protein belongs to the TonB-dependent receptor family.

The protein localises to the cell outer membrane. Receptor for cloacin DF13/aerobactin. This chain is Ferric aerobactin receptor (iutA), found in Escherichia coli.